A 299-amino-acid polypeptide reads, in one-letter code: MAEFPASLLILNGKSTDNLPLREAIMLLREEGMTIHVRVTWEKGDAARYVEEARKLGVATVIAGGGDGTINEVSTALIQCEGDDIPALGILPLGTANDFATSVGIPEALDKALKLAIAGNAIAIDMAQVNKQTCFINMATGGFGTRITTETPEKLKAALGGVSYIIHGLMRMDTLQPDRCEIRGENFHWQGDALVIGIGNGRQAGGGQQLCPNALINDGLLQLRIFTGDEIIPTLVSTLKSDEDNPNIIEGASSWFDIQAPHEITFNLDGEPLSGQNFHIEILPAALRCRLPPDCPLLR.

The DAGKc domain occupies 2–133; it reads AEFPASLLIL…IDMAQVNKQT (132 aa). ATP contacts are provided by residues T40, 66–72, and T95; that span reads GDGTINE. Mg(2+)-binding residues include L215, D218, and L220. The active-site Proton acceptor is the E271.

This sequence belongs to the diacylglycerol/lipid kinase family. YegS lipid kinase subfamily. It depends on Mg(2+) as a cofactor. The cofactor is Ca(2+).

The protein resides in the cytoplasm. Functionally, probably phosphorylates lipids; the in vivo substrate is unknown. This chain is Probable lipid kinase YegS, found in Escherichia coli O45:K1 (strain S88 / ExPEC).